The chain runs to 375 residues: MSKRDYYDVLGVNRDASDDDIKKAYRKLAMKYHPDRNPDSKEAEDKFKEVKEAYEILSDSQKRGAYDQFGHAGVDPQAGMGGGGQGFGGFGDFADIFSDIFGGGRGGSGGGRSNVYRGADLRYNMEITLEEAARGCEKQIRIPSHESCSTCNGTGAKPGTQPKTCATCGGHGQVRMSQGFFSIQQTCPTCHGTGKQITDPCGSCHGAGQKKTTKTLNVKIPAGVDEGDRIRLGGEGEPGQNGGPAGDLYVVTHIKQHAVFQRDGMDLHCEMPISFSTAALGGEVEIPTLDGMAKVKISPETQSGRVYRLRGKGVKAVRGAEYGDLHCHVVVETPVKLTERQKELLREFEAISQGDVATHNPRSKSFMDKLRDFFE.

One can recognise a J domain in the interval 5–70; the sequence is DYYDVLGVNR…QKRGAYDQFG (66 aa). The CR-type zinc finger occupies 135-213; sequence GCEKQIRIPS…CHGAGQKKTT (79 aa). Cysteine 148, cysteine 151, cysteine 165, cysteine 168, cysteine 187, cysteine 190, cysteine 201, and cysteine 204 together coordinate Zn(2+). 4 CXXCXGXG motif repeats span residues 148-155, 165-172, 187-194, and 201-208; these read CSTCNGTG, CATCGGHG, CPTCHGTG, and CGSCHGAG.

Belongs to the DnaJ family. In terms of assembly, homodimer. It depends on Zn(2+) as a cofactor.

The protein resides in the cytoplasm. Functionally, participates actively in the response to hyperosmotic and heat shock by preventing the aggregation of stress-denatured proteins and by disaggregating proteins, also in an autonomous, DnaK-independent fashion. Unfolded proteins bind initially to DnaJ; upon interaction with the DnaJ-bound protein, DnaK hydrolyzes its bound ATP, resulting in the formation of a stable complex. GrpE releases ADP from DnaK; ATP binding to DnaK triggers the release of the substrate protein, thus completing the reaction cycle. Several rounds of ATP-dependent interactions between DnaJ, DnaK and GrpE are required for fully efficient folding. Also involved, together with DnaK and GrpE, in the DNA replication of plasmids through activation of initiation proteins. The protein is Chaperone protein DnaJ of Chromobacterium violaceum (strain ATCC 12472 / DSM 30191 / JCM 1249 / CCUG 213 / NBRC 12614 / NCIMB 9131 / NCTC 9757 / MK).